A 388-amino-acid chain; its full sequence is Protein RMD5 homolog (388 aa).

Positions 112-144 constitute a LisH domain; it reads DTHIVNQIIANFFYRQGMFDIGDCFVAETGESE. In terms of domain architecture, CTLH spans 150–207; the sequence is SFVEMYRILEAMKRRDLEPALNWAVSNSDKLKEARSDLEMKLHSLHFLEIARGKNSKE. An RING-Gid-type zinc finger spans residues 330-374; the sequence is CPVSKEQSSDDNPPMMMSCGHVLCKQTINKMSKNGSKSSFKCPYC.

As to quaternary structure, interacts with RANBPM.

It is found in the cytoplasm. The polypeptide is Protein RMD5 homolog (Arabidopsis thaliana (Mouse-ear cress)).